The following is a 551-amino-acid chain: Adenine deaminase (551 aa).

The protein belongs to the metallo-dependent hydrolases superfamily. Adenine deaminase family. The cofactor is Mn(2+).

The catalysed reaction is adenine + H2O + H(+) = hypoxanthine + NH4(+). The protein is Adenine deaminase of Leuconostoc mesenteroides subsp. mesenteroides (strain ATCC 8293 / DSM 20343 / BCRC 11652 / CCM 1803 / JCM 6124 / NCDO 523 / NBRC 100496 / NCIMB 8023 / NCTC 12954 / NRRL B-1118 / 37Y).